The chain runs to 892 residues: MRMSAGLSLLLPLWGRTFLLLLSVAMAQSHWPSEAGRDWENQLEASMHSVLSDLHEAVPTVVGIPDGIAVVGRSFRVTIPMDLIASNGELVKVSAVGKEVLPSWLHWDPQSHTLEGLPLDTDKGVHYISVSATRLGANGSHVPQTSSVFSIEVYPEDHSEPQSVRAASPDPAEVVSSACAADEPVTVLTVILDADLTKMTPKQRIDLLHRMRSFSEVELHNMKLVPVVNNRLFDMSAFMAGPGNAKKVVENGALLSWKLGCSLNQNNVPDIHGVEAPAREGAMSAQLGYPVVGWHIANKKPPIPKRIRRQIHATPTPVTAIGPPTTAIQEPPSRIVPTPTSPAIAPPTETMAPPVRDPVPGKPTVTIRTRGAIIQTPTLGPIQPTRVSEAGTTVPGQIRPTMTIPGYVEPTAVATPPTTTTKKPRVSTPKPATPSTDSSTTTTRRPTKKPRTPRPVPRVTTKAPITRLETASPPTRIRTTTSGVPRGGEPNQRPELKNHIDRVDAWVGTYFEVKIPSDTFYDHEDTTTDKLKLTLKLREQQLVGEKSWVQFNSNSQLMYGLPDSSHVGKHEYFMHATDKGGLSAVDAFEIHVHKRPQGDRAPARFKAKFMGDPVPVVNDIHKKISLVKKLAFAFGDRNCSTITLQNITRGSILVEWTNNTLPLEPCPKEQIMALSQRIAEDNGKPRAAFSNALEPDFQASSIAVTGSGSCRHLQFIPVAPPRRVPSEVPSTDVPDRDPEKSSEDDVYLHTVIPAVVVAAILLIAGIIAMICYRKKRKGKLTLEDQATFIKKGVPIIFADELDDSKPPPSSSMPLILQEEKAPLPPPEYPNQSVPETTPLNQDTVGEYTPLREEDPNAPPYQPPPPFTAPMEGKGSRPKNMTPYRSPPPYVPP.

Positions 1 to 27 (MRMSAGLSLLLPLWGRTFLLLLSVAMA) are cleaved as a signal peptide. At 28 to 750 (QSHWPSEAGR…SSEDDVYLHT (723 aa)) the chain is on the extracellular side. Residues 30 to 405 (HWPSEAGRDW…GQIRPTMTIP (376 aa)) form a required for laminin recognition region. The segment at 46–68 (SMHSVLSDLHEAVPTVVGIPDGI) is O-glycosylated at one site. N138 carries N-linked (GlcNAc...) asparagine glycosylation. C179 and C261 are oxidised to a cystine. The tract at residues 313–482 (ATPTPVTAIG…PPTRIRTTTS (170 aa)) is mucin-like domain. T314, T316, and T376 each carry an O-linked (Man6P...) threonine glycan. Residues 378-497 (TLGPIQPTRV…GEPNQRPELK (120 aa)) are disordered. The span at 410–444 (PTAVATPPTTTTKKPRVSTPKPATPSTDSSTTTTR) shows a compositional bias: low complexity. The segment at 460–482 (TTKAPITRLETASPPTRIRTTTS) is O-glycosylated at seven sites with GalNAc. One can recognise a Peptidase S72 domain in the interval 600–709 (RAPARFKAKF…SSIAVTGSGS (110 aa)). N-linked (GlcNAc...) asparagine glycans are attached at residues N638, N646, and N658. A disulfide bond links C666 and C710. The disordered stretch occupies residues 721 to 742 (PRRVPSEVPSTDVPDRDPEKSS). The span at 733–742 (VPDRDPEKSS) shows a compositional bias: basic and acidic residues. Residues 751-771 (VIPAVVVAAILLIAGIIAMIC) traverse the membrane as a helical segment. The Cytoplasmic portion of the chain corresponds to 772–892 (YRKKRKGKLT…YRSPPPYVPP (121 aa)). The short motif at 773 to 779 (RKKRKGK) is the Nuclear localization signal element. T787 carries the phosphothreonine modification. A required for interaction with CAV3 region spans residues 816 to 892 (LQEEKAPLPP…YRSPPPYVPP (77 aa)). The disordered stretch occupies residues 820 to 892 (KAPLPPPEYP…YRSPPPYVPP (73 aa)). Over residues 829–843 (PNQSVPETTPLNQDT) the composition is skewed to polar residues. A compositionally biased stretch (pro residues) spans 856–867 (NAPPYQPPPPFT). A required for binding DMD and UTRN region spans residues 877 to 892 (PKNMTPYRSPPPYVPP). The short motif at 886-889 (PPPY) is the PPXY motif element. Y889 carries the phosphotyrosine; by SRC modification.

As to quaternary structure, monomer. Heterodimer of alpha- and beta-dystroglycan subunits which are the central components of the dystrophin-glycoprotein complex. This complex then can form a dystrophin-associated glycoprotein complex (DGC) which is composed of three subcomplexes: a cytoplasmic complex comprised of DMD (or UTRN), DTNA and a number of syntrophins, such as SNTB1, SNTB2, SNTG1 and SNTG2, the transmembrane dystroglycan complex, and the sarcoglycan-sarcospan complex. Interacts (via the N-terminal of alphaDAG1) with LARGE1; the interaction enhances laminin binding. Interacts with SGCD. Interacts with AGR2 and AGR3. Interacts (betaDAG1) with DMD; the interaction is inhibited by phosphorylation on the PPXY motif. Interacts (betaDAG1, via its PPXY motif) with UTRN (via its WWW and ZZ domains); the interaction is inhibited by phosphorylation on the PPXY motif. Interacts (betaDAG1, via its phosphorylated PPXY motif) with the SH2 domain-containing proteins, FYN, CSK, NCK and SHC. Interacts (betaDAG1) with CAV3 (via a central WW-like domain); the interaction disrupts the binding of DMD. BetaDAG1 directly interacts with ANK3, but not with ANK2; this interaction does not interfere with DMD-binding and is required for retention at costameres. Identified in a dystroglycan complex that contains at least PRX, DRP2, UTRN, DMD and DAG1. Interacts with POMGNT1. BetaDAG1 interacts with CD93. In terms of processing, O-glycosylated. POMGNT1 catalyzes the initial addition of N-acetylglucosamine, giving rise to the GlcNAc(beta1-2)Man(alpha1-)O-Ser/Thr moiety and thus providing the necessary basis for the addition of further carbohydrate moieties. Heavily O-glycosylated comprising of up to two thirds of its mass and the carbohydrate composition differs depending on tissue type. Mucin-type O-glycosylation is important for ligand binding activity. O-mannosylation is found in high abundance in both brain and muscle where the most abundant glycan is Sia-alpha-2-3-Gal-beta-1-4-Glc-NAc-beta-1-2-Man. In muscle, glycosylation on Thr-314, Thr-316 and Thr-376 by a phosphorylated O-mannosyl glycan with the structure 2-(N-acetylamido)-2-deoxygalactosyl-beta-1,3-2-(N-acetylamido)-2-deoxyglucosyl-beta-1,4-6-phosphomannose is mediated by like-acetylglucosaminyltransferase (LARGE1) protein amd is required for laminin binding. O-glycosylated in the N-terminal region with a core 1 or possibly core 8 glycan. The brain form displays a unique glycosylation pattern which is absent in other tissues; this form shows enhanced binding to laminin LAMA5 compared to the skeletal muscle form. N-glycosylated. Post-translationally, autolytic cleavage produces the alpha and beta subunits. In cutaneous cells, as well as in certain pathological conditions, shedding of beta-dystroglycan can occur releasing a peptide of about 30 kDa. In terms of processing, SRC-mediated phosphorylation of the PPXY motif of the beta subunit recruits SH2 domain-containing proteins, but inhibits binding to WWW domain-containing proteins, DMD and UTRN. This phosphorylation also inhibits nuclear entry.

It is found in the secreted. It localises to the extracellular space. Its subcellular location is the cell membrane. The protein resides in the cytoplasm. The protein localises to the cytoskeleton. It is found in the nucleus. It localises to the nucleoplasm. Its subcellular location is the sarcolemma. The protein resides in the postsynaptic cell membrane. The dystroglycan complex is involved in a number of processes including laminin and basement membrane assembly, sarcolemmal stability, cell survival, peripheral nerve myelination, nodal structure, cell migration, and epithelial polarization. In terms of biological role, extracellular peripheral glycoprotein that acts as a receptor for extracellular matrix proteins containing laminin-G domains. Receptor for laminin-2 (LAMA2) and agrin in peripheral nerve Schwann cells. Also acts as a receptor for laminin LAMA5. Functionally, transmembrane protein that plays important roles in connecting the extracellular matrix to the cytoskeleton. Acts as a cell adhesion receptor in both muscle and non-muscle tissues. Receptor for both DMD and UTRN and, through these interactions, scaffolds axin to the cytoskeleton. Also functions in cell adhesion-mediated signaling and implicated in cell polarity. The polypeptide is Dystroglycan 1 (Canis lupus familiaris (Dog)).